A 234-amino-acid polypeptide reads, in one-letter code: MTAQLQPYQREFIEFAIDEGVLKFGEFTLKSGRISPYFFNAGLFKSGRALARLGRFYAQAIAHSGLEADVLFGPAYKGIPLATTTAVALADHHDRDLPFAFNRKEAKAHGEGGNIVGAALAGRVLIIDDVITAGTAIREVMQLIDAAGAEAAGVVIALDRQERGQDENGLKAQSAIQEVTSQYGMPVVSIVTLDQVLAYLETRQSQGDESDQSLRQHADAIRAYRDRYGVRLDG.

Lysine 30 serves as a coordination point for 5-phospho-alpha-D-ribose 1-diphosphate. 38-39 (FF) provides a ligand contact to orotate. Residues 76 to 77 (YK), arginine 103, lysine 104, lysine 107, histidine 109, and 128 to 136 (DDVITAGTA) each bind 5-phospho-alpha-D-ribose 1-diphosphate. Residues threonine 132 and arginine 160 each contribute to the orotate site.

The protein belongs to the purine/pyrimidine phosphoribosyltransferase family. PyrE subfamily. As to quaternary structure, homodimer. Mg(2+) serves as cofactor.

The catalysed reaction is orotidine 5'-phosphate + diphosphate = orotate + 5-phospho-alpha-D-ribose 1-diphosphate. The protein operates within pyrimidine metabolism; UMP biosynthesis via de novo pathway; UMP from orotate: step 1/2. Its function is as follows. Catalyzes the transfer of a ribosyl phosphate group from 5-phosphoribose 1-diphosphate to orotate, leading to the formation of orotidine monophosphate (OMP). The sequence is that of Orotate phosphoribosyltransferase from Chromohalobacter salexigens (strain ATCC BAA-138 / DSM 3043 / CIP 106854 / NCIMB 13768 / 1H11).